Reading from the N-terminus, the 593-residue chain is NADH-quinone oxidoreductase subunit C/D (593 aa).

The tract at residues 1-184 (MTADTAVSIP…DPFSLTLAKQ (184 aa)) is NADH dehydrogenase I subunit C. The tract at residues 208 to 593 (DYMFLNLGPN…IDFVMADVDR (386 aa)) is NADH dehydrogenase I subunit D.

In the N-terminal section; belongs to the complex I 30 kDa subunit family. It in the C-terminal section; belongs to the complex I 49 kDa subunit family. In terms of assembly, NDH-1 is composed of 13 different subunits. Subunits NuoB, CD, E, F, and G constitute the peripheral sector of the complex.

It localises to the cell inner membrane. It carries out the reaction a quinone + NADH + 5 H(+)(in) = a quinol + NAD(+) + 4 H(+)(out). Its function is as follows. NDH-1 shuttles electrons from NADH, via FMN and iron-sulfur (Fe-S) centers, to quinones in the respiratory chain. The immediate electron acceptor for the enzyme in this species is believed to be ubiquinone. Couples the redox reaction to proton translocation (for every two electrons transferred, four hydrogen ions are translocated across the cytoplasmic membrane), and thus conserves the redox energy in a proton gradient. The polypeptide is NADH-quinone oxidoreductase subunit C/D (Ectopseudomonas mendocina (strain ymp) (Pseudomonas mendocina)).